Reading from the N-terminus, the 245-residue chain is Polyhedrin (245 aa).

Belongs to the polyhedrin family.

In terms of biological role, major component of the virus occlusion bodies, which are large proteinaceous structures (polyhedra), that protect the virus from the outside environment for extended periods until they are ingested by insect larvae. This is Polyhedrin from Lepidoptera (butterflies and moths).